The primary structure comprises 660 residues: MADNSGTEGEEEDCSEAERAGGWFMVEAIVDRRTGDTISSDEDEEDEGEDMVDFIDDRPIGDGQEVAQELLLQQAAADDDEAVHTVKRKFAPSPYFSPVCVPSIEHELSPRLDAIKLGRQSSKAKRRLFQLPDSGYGQTQVDTDTGPSQVQDGCETGDQNGRQQYKEGSGTKDGENGSQEEERAGGDGEESQPLSTETEKGACGVLSILKASNQKATLLGKFKEQFGLGYNELVRHFKSSRTACVDWVVCVFGVYCTVAEGIKQLIQPLCEYAHIQVLPCQWGMTVLMLVRYKRAKNRETVAKGLSTLLNVPESHMLIEPPKLRSSPAALYWYKTSMSNISDVYGETPEWIVRQTMVGHALQEVQFSLSEMVQWAYDHDITDEGTLAYEYALIADVDSNAAAFLASNCQAKYVKDACTMCRHYKRGEQARMSMSEWIRFRSNKVQGEGDWKPIVHFLRYQNVEFIPFLCAFKLFLQGIPKKSCLVFYGPADTGKSYFCMSLLKFMGGVVISYANSHSHFWLQPLSEAKMGLLDDATSQCWSYVDTYLRNALDGNVMCIDRKHRSLLQLKCPPLLITTNVNPLEDDRWKYLRSRLQVFTFSNPCPLTSKGEPVYTLNDQNWKSFFQRLWARLSLTDPDDEEENGEPSEPFRCVPGQNTRTV.

A disordered region spans residues Met-1–Ile-60. Residues Ser-39–Phe-54 are compositionally biased toward acidic residues. The Nuclear localization signal signature appears at Lys-87–Lys-89. 4 positions are modified to phosphoserine; by host: Ser-93, Ser-97, Ser-109, and Ser-122. Positions Leu-108–Leu-117 match the Nuclear export signal motif. Residues Leu-128–Thr-196 are disordered. Residues Tyr-136 to Gln-163 show a composition bias toward polar residues. Basic and acidic residues predominate over residues Ser-169–Gly-186. The tract at residues Glu-197 to Glu-363 is DNA-binding region. The 151-residue stretch at Val-462 to Val-612 folds into the SF3 helicase domain. Residue Gly-488–Ser-495 participates in ATP binding. Lys-569 is covalently cross-linked (Glycyl lysine isopeptide (Lys-Gly) (interchain with G-Cter in SUMO)). Positions Asp-635 to Glu-644 are enriched in acidic residues. The segment at Asp-635 to Val-660 is disordered.

This sequence belongs to the papillomaviridae E1 protein family. Can form hexamers. Interacts with E2 protein; this interaction increases E1 DNA binding specificity. Interacts with host DNA polymerase subunit POLA2. Interacts with host single stranded DNA-binding protein RPA1. Interacts with host TOP1; this interaction stimulates the enzymatic activity of TOP1. Post-translationally, phosphorylated. In terms of processing, sumoylated.

Its subcellular location is the host nucleus. The enzyme catalyses Couples ATP hydrolysis with the unwinding of duplex DNA by translocating in the 3'-5' direction.. The catalysed reaction is ATP + H2O = ADP + phosphate + H(+). In terms of biological role, ATP-dependent DNA 3'-5' helicase required for initiation of viral DNA replication. It forms a complex with the viral E2 protein. The E1-E2 complex binds to the replication origin which contains binding sites for both proteins. During the initial step, a dimer of E1 interacts with a dimer of protein E2 leading to a complex that binds the viral origin of replication with high specificity. Then, a second dimer of E1 displaces the E2 dimer in an ATP-dependent manner to form the E1 tetramer. Following this, two E1 monomers are added to each half of the site, which results in the formation of two E1 trimers on the viral ori. Subsequently, two hexamers will be created. The double hexamer acts as a bi-directional helicase machinery and unwinds the viral DNA and then recruits the host DNA polymerase to start replication. In Human papillomavirus 29, this protein is Replication protein E1.